The chain runs to 358 residues: UPF0725 protein At4g29550 (358 aa).

Residues 31–82 are disordered; sequence LNKHPPSGSGWTDEDDDNDDVFSSSFISKEELSDAVHNDPPSGWTDEDDDDQ. The segment covering 58-67 has biased composition (basic and acidic residues); that stretch reads SKEELSDAVH.

The protein belongs to the UPF0725 (EMB2204) family.

The chain is UPF0725 protein At4g29550 from Arabidopsis thaliana (Mouse-ear cress).